A 604-amino-acid polypeptide reads, in one-letter code: Protein CBFA2T2 (604 aa).

A disordered region spans residues 25–105; that stretch reads KRVPAMPGSP…SSTSSALTNQ (81 aa). Phosphoserine is present on Ser33. Residue Lys38 forms a Glycyl lysine isopeptide (Lys-Gly) (interchain with G-Cter in SUMO2) linkage. A compositionally biased stretch (pro residues) spans 46-59; the sequence is PTMPPLPPINPGGP. Polar residues-rich tracts occupy residues 64-79 and 88-105; these read FTPTALSNGINHSPPT and QRFSNGPASSTSSALTNQ. The interval 107–215 is interaction with PRDM14; the sequence is LPATCGARQL…QHEHLLLNTS (109 aa). In terms of domain architecture, TAFH spans 113–208; the sequence is ARQLSKLKRF…TPSQYLAQHE (96 aa). Positions 229 to 265 are disordered; the sequence is VHGNGKRPSPERREENSFDRDTIAPEPPAKRVCTISP. Over residues 236 to 251 the composition is skewed to basic and acidic residues; it reads PSPERREENSFDRDTI. Ser264 carries the phosphoserine modification. Residues 331–377 form a nervy homology region 2 (NHR2) region; sequence QDELVDHRLTEREWADEWKHLDHALNCIMEMVEKTRRSMAVLRRCQE. The segment at 397–427 is disordered; the sequence is RKTGTELVSRQHSPGSADSLSNDSQREFNSR. Polar residues predominate over residues 402-419; the sequence is ELVSRQHSPGSADSLSND. Position 409 is a phosphoserine (Ser409). The tract at residues 435–484 is nervy homology region 3 (NHR3); the sequence is VEFWKKTEEAVNKVKIQAMSEVQKAVAEAEQKAFEVIATERARMEQTIAD. A Glycyl lysine isopeptide (Lys-Gly) (interchain with G-Cter in SUMO2) cross-link involves residue Lys449. Positions 451 to 491 form a coiled coil; the sequence is QAMSEVQKAVAEAEQKAFEVIATERARMEQTIADVKRQAAE. Zn(2+) contacts are provided by Cys507, Cys510, Cys518, Cys521, Cys527, Cys531, His539, and Cys543. Residues 507–543 form an MYND-type zinc finger; the sequence is CWNCGRKASETCSGCNIARYCGSFCQHKDWERHHRLC. The tract at residues 547–604 is disordered; that stretch reads LHGQSPHGQGRPLLPVGRGSSARSADCSVPSPALDKTSATTSRSSTPASVTAIDTNGL. A Phosphoserine modification is found at Ser577. The span at 583 to 598 shows a compositional bias: low complexity; it reads TSATTSRSSTPASVTA.

The protein belongs to the CBFA2T family. Homooligomer. Homotetramerization is mediated by nervy homology region 2. Can interact with RUNX1T1/CBFA2T1 and CBFA2T3/MTG16; heterotetramerization between members of the CBFA2T family is proposed. Forms a heterooligomer with the AML1-MTG8/ETO fusion protein. Interacts with PRDM14. Interacts with RBPJ, GFI1, TCF4. Interacts with TAL1 and CBFA2T3/MTG16; the heteromer with CBFA2T3/MTG16 may function in repression of TAL1. In terms of tissue distribution, ubiquitously expressed in fetal and adult tissues. Highly expressed in adult brain, heart, lung, kidney, lymph node, appendix, thymus, testis, uterus, small intestine, prostate and thymus.

The protein localises to the nucleus. Its function is as follows. Transcriptional corepressor which facilitates transcriptional repression via its association with DNA-binding transcription factors and recruitment of other corepressors and histone-modifying enzymes. Via association with PRDM14 is involved in regulation of embryonic stem cell (ESC) pluripotency. Involved in primordial germ cell (PCG) formation. Stabilizes PRDM14 and OCT4 on chromatin in a homooligomerization-dependent manner. Can repress the expression of MMP7 in a ZBTB33-dependent manner. May function as a complex with the chimeric protein RUNX1/AML1-CBFA2T1/MTG8 (AML1-MTG8/ETO fusion protein) which is produced in acute myeloid leukemia with the chromosomal translocation t(8;21). May thus be involved in the repression of AML1-dependent transcription and the induction of G-CSF/CSF3-dependent cell growth. May be a tumor suppressor gene candidate involved in myeloid tumors with the deletion of the 20q11 region. Through heteromerization with CBFA2T3/MTG16 may be involved in regulation of the proliferation and the differentiation of erythroid progenitors by repressing the expression of TAL1 target genes. Required for the maintenance of the secretory cell lineage in the small intestine. Can inhibit Notch signaling probably by association with RBPJ and may be involved in GFI1-mediated Paneth cell differentiation. The polypeptide is Protein CBFA2T2 (CBFA2T2) (Homo sapiens (Human)).